The primary structure comprises 260 residues: Thiazole synthase (260 aa).

Lysine 96 (schiff-base intermediate with DXP) is an active-site residue. Residues glycine 157, 183–184, and 205–206 each bind 1-deoxy-D-xylulose 5-phosphate; these read AG and AS.

This sequence belongs to the ThiG family. Homotetramer. Forms heterodimers with either ThiH or ThiS.

It localises to the cytoplasm. The enzyme catalyses [ThiS sulfur-carrier protein]-C-terminal-Gly-aminoethanethioate + 2-iminoacetate + 1-deoxy-D-xylulose 5-phosphate = [ThiS sulfur-carrier protein]-C-terminal Gly-Gly + 2-[(2R,5Z)-2-carboxy-4-methylthiazol-5(2H)-ylidene]ethyl phosphate + 2 H2O + H(+). Its pathway is cofactor biosynthesis; thiamine diphosphate biosynthesis. Its function is as follows. Catalyzes the rearrangement of 1-deoxy-D-xylulose 5-phosphate (DXP) to produce the thiazole phosphate moiety of thiamine. Sulfur is provided by the thiocarboxylate moiety of the carrier protein ThiS. In vitro, sulfur can be provided by H(2)S. The sequence is that of Thiazole synthase from Corynebacterium glutamicum (strain ATCC 13032 / DSM 20300 / JCM 1318 / BCRC 11384 / CCUG 27702 / LMG 3730 / NBRC 12168 / NCIMB 10025 / NRRL B-2784 / 534).